The primary structure comprises 172 residues: Arginine repressor (172 aa).

Belongs to the ArgR family.

Its subcellular location is the cytoplasm. The protein operates within amino-acid biosynthesis; L-arginine biosynthesis [regulation]. Its function is as follows. Regulates arginine biosynthesis genes. This is Arginine repressor from Bifidobacterium adolescentis (strain ATCC 15703 / DSM 20083 / NCTC 11814 / E194a).